The sequence spans 685 residues: DNA ligase (685 aa).

NAD(+)-binding positions include 47–51 (DSEYD), 96–97 (SL), and E125. K127 functions as the N6-AMP-lysine intermediate in the catalytic mechanism. Positions 148, 185, 304, and 328 each coordinate NAD(+). Zn(2+) contacts are provided by C422, C425, C440, and C446. Residues 605-685 (ADAQPLKGQT…ELLALLAANA (81 aa)) form the BRCT domain.

Belongs to the NAD-dependent DNA ligase family. LigA subfamily. Requires Mg(2+) as cofactor. Mn(2+) is required as a cofactor.

The catalysed reaction is NAD(+) + (deoxyribonucleotide)n-3'-hydroxyl + 5'-phospho-(deoxyribonucleotide)m = (deoxyribonucleotide)n+m + AMP + beta-nicotinamide D-nucleotide.. In terms of biological role, DNA ligase that catalyzes the formation of phosphodiester linkages between 5'-phosphoryl and 3'-hydroxyl groups in double-stranded DNA using NAD as a coenzyme and as the energy source for the reaction. It is essential for DNA replication and repair of damaged DNA. This Shewanella baltica (strain OS195) protein is DNA ligase.